A 118-amino-acid polypeptide reads, in one-letter code: Large ribosomal subunit protein bL19 (118 aa).

The protein belongs to the bacterial ribosomal protein bL19 family.

This protein is located at the 30S-50S ribosomal subunit interface and may play a role in the structure and function of the aminoacyl-tRNA binding site. This Herpetosiphon aurantiacus (strain ATCC 23779 / DSM 785 / 114-95) protein is Large ribosomal subunit protein bL19.